Here is a 392-residue protein sequence, read N- to C-terminus: LL-diaminopimelate aminotransferase (392 aa).

Positions 15, 40, 104, 128, and 178 each coordinate substrate. Residues 103 to 104 (SK), Tyr128, Asn178, Tyr209, and 237 to 239 (SVS) contribute to the pyridoxal 5'-phosphate site. Lys240 bears the N6-(pyridoxal phosphate)lysine mark. Position 248 (Arg248) interacts with pyridoxal 5'-phosphate. Residue Arg366 coordinates substrate.

This sequence belongs to the class-I pyridoxal-phosphate-dependent aminotransferase family. LL-diaminopimelate aminotransferase subfamily. Homodimer. The cofactor is pyridoxal 5'-phosphate.

The catalysed reaction is (2S,6S)-2,6-diaminopimelate + 2-oxoglutarate = (S)-2,3,4,5-tetrahydrodipicolinate + L-glutamate + H2O + H(+). It participates in amino-acid biosynthesis; L-lysine biosynthesis via DAP pathway; LL-2,6-diaminopimelate from (S)-tetrahydrodipicolinate (aminotransferase route): step 1/1. Involved in the synthesis of meso-diaminopimelate (m-DAP or DL-DAP), required for both lysine and peptidoglycan biosynthesis. Catalyzes the direct conversion of tetrahydrodipicolinate to LL-diaminopimelate. The protein is LL-diaminopimelate aminotransferase of Desulforudis audaxviator (strain MP104C).